Here is a 274-residue protein sequence, read N- to C-terminus: uncharacterized protein (274 aa).

This is an uncharacterized protein from Treponema pallidum (strain Nichols).